The chain runs to 309 residues: 4-hydroxy-3-methylbut-2-enyl diphosphate reductase (309 aa).

Cys13 is a [4Fe-4S] cluster binding site. Positions 42 and 75 each coordinate (2E)-4-hydroxy-3-methylbut-2-enyl diphosphate. Positions 42 and 75 each coordinate dimethylallyl diphosphate. Isopentenyl diphosphate-binding residues include His42 and His75. Cys97 is a [4Fe-4S] cluster binding site. Residue His125 coordinates (2E)-4-hydroxy-3-methylbut-2-enyl diphosphate. His125 contacts dimethylallyl diphosphate. His125 lines the isopentenyl diphosphate pocket. The Proton donor role is filled by Glu127. Thr165 serves as a coordination point for (2E)-4-hydroxy-3-methylbut-2-enyl diphosphate. Residue Cys195 participates in [4Fe-4S] cluster binding. (2E)-4-hydroxy-3-methylbut-2-enyl diphosphate contacts are provided by Ser223, Ser224, Asn225, and Ser267. Residues Ser223, Ser224, Asn225, and Ser267 each contribute to the dimethylallyl diphosphate site. Residues Ser223, Ser224, Asn225, and Ser267 each contribute to the isopentenyl diphosphate site.

It belongs to the IspH family. It depends on [4Fe-4S] cluster as a cofactor.

The catalysed reaction is isopentenyl diphosphate + 2 oxidized [2Fe-2S]-[ferredoxin] + H2O = (2E)-4-hydroxy-3-methylbut-2-enyl diphosphate + 2 reduced [2Fe-2S]-[ferredoxin] + 2 H(+). The enzyme catalyses dimethylallyl diphosphate + 2 oxidized [2Fe-2S]-[ferredoxin] + H2O = (2E)-4-hydroxy-3-methylbut-2-enyl diphosphate + 2 reduced [2Fe-2S]-[ferredoxin] + 2 H(+). Its pathway is isoprenoid biosynthesis; dimethylallyl diphosphate biosynthesis; dimethylallyl diphosphate from (2E)-4-hydroxy-3-methylbutenyl diphosphate: step 1/1. The protein operates within isoprenoid biosynthesis; isopentenyl diphosphate biosynthesis via DXP pathway; isopentenyl diphosphate from 1-deoxy-D-xylulose 5-phosphate: step 6/6. Catalyzes the conversion of 1-hydroxy-2-methyl-2-(E)-butenyl 4-diphosphate (HMBPP) into a mixture of isopentenyl diphosphate (IPP) and dimethylallyl diphosphate (DMAPP). Acts in the terminal step of the DOXP/MEP pathway for isoprenoid precursor biosynthesis. The polypeptide is 4-hydroxy-3-methylbut-2-enyl diphosphate reductase (Chlamydia caviae (strain ATCC VR-813 / DSM 19441 / 03DC25 / GPIC) (Chlamydophila caviae)).